The chain runs to 115 residues: Basic leucine zipper transcriptional factor ATF-like (115 aa).

The tract at residues 1 to 60 is disordered; the sequence is MQQESDRNEQGYSSSPPSSNKQDSSDDTKKNHRREKNRIAAQKSRQRQTEKADSLHIESE. Positions 13 to 22 are enriched in low complexity; that stretch reads SSSPPSSNKQ. A bZIP domain is found at 27-90; the sequence is DTKKNHRREK…KYLTCVLSTH (64 aa). A basic motif region spans residues 29–51; that stretch reads KKNHRREKNRIAAQKSRQRQTEK. Positions 47–60 are enriched in basic and acidic residues; it reads RQTEKADSLHIESE. The leucine-zipper stretch occupies residues 55-83; the sequence is LHIESENLERLNSALRGEISGLREELKYL.

This sequence belongs to the bZIP family.

The protein localises to the nucleus. The protein resides in the cytoplasm. Functionally, AP-1 family transcription factor that controls the differentiation of lineage-specific cells in the immune system: specifically mediates the differentiation of T-helper 17 cells (Th17), follicular T-helper cells (TfH), CD8(+) dendritic cells and class-switch recombination (CSR) in B-cells. This is Basic leucine zipper transcriptional factor ATF-like (batf) from Xenopus laevis (African clawed frog).